A 631-amino-acid chain; its full sequence is MAANNSIEWRAVCEKFRLAQELSEIESKKDPENNPFRSKYKARDLLKEIHCSLKKIEIEEQGEAGDEADCESSQTADGEPEDGFEKTFTGDSAAGLRAARLAVLQYHLGVNHIETEELSAGELHLMVCMKLIDKCTTTRENVSLFIHVRNQLGILWAGRDEIEKAQGFLEIAETMYLVYMKEDGQPPLDLQDFFVPEGEELSQQEKIRRFEMAYTHTLYYLAQVYKNLQQYERAAQYCHSTLQRQLEYKQFAPLEWAINAATLSQYYITKTRYMEARHCLAAASVIANLAGEIPSEAAAKESEAESEKREELLQKRAEIARCWIKYCLNLLQDAKKLLEDNIGELDLDRQDELKRARRNEEEEKEKGRKSAILFGSSDTFDSICSLEEKVSSMLPLEFEEARSIFLVGQSYVTQAKEYFAMDGHVTDHIEILQDHSALFKVLAFFEEDLERRCKMHKRRVDMLEPICKDLNAQYYLLICRQLQFELAETYYEMMDLKLAVADKLDQPDVHTIKKFNHLCSSSMKYYQMFLDSTRSPEGKFPEKLEDDLLRPALVAKFRVARLHSKLISSNLATQMENLSLSLESYNFVVQYCEENPEAKNAVETELELSMEMVSLLPLKINRIRSTLASSK.

Residues 60–70 (EQGEAGDEADC) are compositionally biased toward acidic residues. The tract at residues 60 to 88 (EQGEAGDEADCESSQTADGEPEDGFEKTF) is disordered.

The protein belongs to the KIF-binding protein family. In terms of tissue distribution, at 30 hpf, primarily expressed in central and peripheral neurons.

The protein resides in the cytoplasm. It localises to the cytoskeleton. Activator of KIF1B plus-end-directed microtubule motor activity. Required for organization of axonal microtubules, and axonal outgrowth and maintenance during peripheral and central nervous system development. The sequence is that of KIF-binding protein (kifbp) from Danio rerio (Zebrafish).